The sequence spans 467 residues: Glycosyl hydrolase family 109 protein 1 (467 aa).

The first 22 residues, Met-1–Ala-22, serve as a signal peptide directing secretion. Residues Met-66 to Arg-67, Asp-88, Trp-137 to His-140, Glu-157 to Val-158, and Asn-186 each bind NAD(+). Substrate contacts are provided by residues Tyr-215, Arg-231, Tyr-243 to His-246, and Tyr-321. Tyr-243 is an NAD(+) binding site.

It belongs to the Gfo/Idh/MocA family. Glycosyl hydrolase 109 subfamily. Requires NAD(+) as cofactor.

Its function is as follows. Glycosidase. The protein is Glycosyl hydrolase family 109 protein 1 of Bacteroides thetaiotaomicron (strain ATCC 29148 / DSM 2079 / JCM 5827 / CCUG 10774 / NCTC 10582 / VPI-5482 / E50).